A 357-amino-acid polypeptide reads, in one-letter code: Glycerol-3-phosphate dehydrogenase [NAD(P)+] (357 aa).

The NADPH site is built by serine 30, phenylalanine 31, arginine 51, and lysine 124. Residues lysine 124 and glycine 152 each coordinate sn-glycerol 3-phosphate. Alanine 156 is an NADPH binding site. Sn-glycerol 3-phosphate contacts are provided by lysine 207, aspartate 260, serine 270, arginine 271, and asparagine 272. Lysine 207 serves as the catalytic Proton acceptor. NADPH is bound at residue arginine 271. Glutamate 297 lines the NADPH pocket.

Belongs to the NAD-dependent glycerol-3-phosphate dehydrogenase family.

The protein localises to the cytoplasm. It carries out the reaction sn-glycerol 3-phosphate + NAD(+) = dihydroxyacetone phosphate + NADH + H(+). It catalyses the reaction sn-glycerol 3-phosphate + NADP(+) = dihydroxyacetone phosphate + NADPH + H(+). It participates in membrane lipid metabolism; glycerophospholipid metabolism. Catalyzes the reduction of the glycolytic intermediate dihydroxyacetone phosphate (DHAP) to sn-glycerol 3-phosphate (G3P), the key precursor for phospholipid synthesis. This is Glycerol-3-phosphate dehydrogenase [NAD(P)+] from Acinetobacter baylyi (strain ATCC 33305 / BD413 / ADP1).